The chain runs to 148 residues: Putative pre-16S rRNA nuclease (148 aa).

It belongs to the YqgF nuclease family.

It localises to the cytoplasm. Could be a nuclease involved in processing of the 5'-end of pre-16S rRNA. The sequence is that of Putative pre-16S rRNA nuclease from Chlamydia muridarum (strain MoPn / Nigg).